The following is a 217-amino-acid chain: Cytochrome c biogenesis ATP-binding export protein CcmA (217 aa).

In terms of domain architecture, ABC transporter spans 6–215 (FSAKNLACVR…HLDQFAVAEE (210 aa)). 38 to 45 (GPNGSGKS) is a binding site for ATP.

Belongs to the ABC transporter superfamily. CcmA exporter (TC 3.A.1.107) family. In terms of assembly, the complex is composed of two ATP-binding proteins (CcmA) and two transmembrane proteins (CcmB).

It is found in the cell inner membrane. The catalysed reaction is heme b(in) + ATP + H2O = heme b(out) + ADP + phosphate + H(+). Part of the ABC transporter complex CcmAB involved in the biogenesis of c-type cytochromes; once thought to export heme, this seems not to be the case, but its exact role is uncertain. Responsible for energy coupling to the transport system. The protein is Cytochrome c biogenesis ATP-binding export protein CcmA of Paramagnetospirillum magneticum (strain ATCC 700264 / AMB-1) (Magnetospirillum magneticum).